The sequence spans 191 residues: Peptidyl-tRNA hydrolase (191 aa).

Tyr-16 provides a ligand contact to tRNA. Catalysis depends on His-21, which acts as the Proton acceptor. TRNA is bound by residues Phe-67, Asn-69, and Asn-115.

This sequence belongs to the PTH family. Monomer.

The protein localises to the cytoplasm. The catalysed reaction is an N-acyl-L-alpha-aminoacyl-tRNA + H2O = an N-acyl-L-amino acid + a tRNA + H(+). Its function is as follows. Hydrolyzes ribosome-free peptidyl-tRNAs (with 1 or more amino acids incorporated), which drop off the ribosome during protein synthesis, or as a result of ribosome stalling. Functionally, catalyzes the release of premature peptidyl moieties from peptidyl-tRNA molecules trapped in stalled 50S ribosomal subunits, and thus maintains levels of free tRNAs and 50S ribosomes. This chain is Peptidyl-tRNA hydrolase, found in Ruthia magnifica subsp. Calyptogena magnifica.